The following is a 334-amino-acid chain: Anthranilate phosphoribosyltransferase (334 aa).

Residues Gly-79, 82–83 (GD), Ser-87, 89–92 (NIST), 107–115 (KHGNRSISS), and Ser-119 each bind 5-phospho-alpha-D-ribose 1-diphosphate. Gly-79 is an anthranilate binding site. A Mg(2+)-binding site is contributed by Ser-91. Asn-110 contacts anthranilate. An anthranilate-binding site is contributed by Arg-165. Mg(2+)-binding residues include Asp-224 and Glu-225.

This sequence belongs to the anthranilate phosphoribosyltransferase family. In terms of assembly, homodimer. Mg(2+) serves as cofactor.

It catalyses the reaction N-(5-phospho-beta-D-ribosyl)anthranilate + diphosphate = 5-phospho-alpha-D-ribose 1-diphosphate + anthranilate. Its pathway is amino-acid biosynthesis; L-tryptophan biosynthesis; L-tryptophan from chorismate: step 2/5. Its function is as follows. Catalyzes the transfer of the phosphoribosyl group of 5-phosphorylribose-1-pyrophosphate (PRPP) to anthranilate to yield N-(5'-phosphoribosyl)-anthranilate (PRA). This Streptococcus gordonii (strain Challis / ATCC 35105 / BCRC 15272 / CH1 / DL1 / V288) protein is Anthranilate phosphoribosyltransferase.